The sequence spans 366 residues: Dof zinc finger protein DOF1.3 (366 aa).

Residues 22–103 (DPYSSSSHVL…KTTELKKPDK (82 aa)) are disordered. Composition is skewed to low complexity over residues 25-45 (SSSS…SLSL) and 56-69 (TDNT…NLNN). 2 stretches are compositionally biased toward basic and acidic residues: residues 70–83 (ESKE…DQHS) and 91–103 (EEEK…KPDK). The Dof-type zinc finger occupies 105–159 (LPCPRCNSADTKFCYYNNYNVNQPRHFCRKCQRYWTAGGSMRIVPVGSGRRKNKG). Residues Cys107, Cys110, Cys132, and Cys135 each coordinate Zn(2+).

The protein localises to the nucleus. Its function is as follows. Transcription factor that binds specifically to a 5'-AA[AG]G-3' consensus core sequence. This chain is Dof zinc finger protein DOF1.3 (DOF1.3), found in Arabidopsis thaliana (Mouse-ear cress).